Reading from the N-terminus, the 609-residue chain is UvrABC system protein C (609 aa).

Residues 15–92 (TGSGVYQMQD…IKQFRPRYNV (78 aa)) form the GIY-YIG domain. In terms of domain architecture, UVR spans 202-237 (DQVIIKLTERMEVTSENLVFEEAAHYRDQIRQLRRL).

The protein belongs to the UvrC family. In terms of assembly, interacts with UvrB in an incision complex.

It localises to the cytoplasm. The UvrABC repair system catalyzes the recognition and processing of DNA lesions. UvrC both incises the 5' and 3' sides of the lesion. The N-terminal half is responsible for the 3' incision and the C-terminal half is responsible for the 5' incision. The polypeptide is UvrABC system protein C (Coxiella burnetii (strain RSA 493 / Nine Mile phase I)).